The sequence spans 546 residues: Probable protein kinase UbiB (546 aa).

A Protein kinase domain is found at 123-501; the sequence is DFDETPLASA…SRRQGQARYL (379 aa). ATP is bound by residues 129–137 and lysine 152; that span reads LASASIAQV. The active-site Proton acceptor is the aspartate 287. Transmembrane regions (helical) follow at residues 496 to 516 and 521 to 541; these read GQARYLLGVGASLLLVGVFLL and HIEWGQISLAGAGLCWLLGWF.

The protein belongs to the ABC1 family. UbiB subfamily.

It localises to the cell inner membrane. It participates in cofactor biosynthesis; ubiquinone biosynthesis [regulation]. Its function is as follows. Is probably a protein kinase regulator of UbiI activity which is involved in aerobic coenzyme Q (ubiquinone) biosynthesis. The sequence is that of Probable protein kinase UbiB from Aeromonas salmonicida (strain A449).